We begin with the raw amino-acid sequence, 352 residues long: Biotin synthase (352 aa).

The Radical SAM core domain occupies 44–262 (NRVQVSTLLS…LAVARLLMPK (219 aa)). 3 residues coordinate [4Fe-4S] cluster: Cys-59, Cys-63, and Cys-66. The [2Fe-2S] cluster site is built by Cys-103, Cys-134, Cys-194, and Arg-266.

The protein belongs to the radical SAM superfamily. Biotin synthase family. Homodimer. [4Fe-4S] cluster is required as a cofactor. [2Fe-2S] cluster serves as cofactor.

The catalysed reaction is (4R,5S)-dethiobiotin + (sulfur carrier)-SH + 2 reduced [2Fe-2S]-[ferredoxin] + 2 S-adenosyl-L-methionine = (sulfur carrier)-H + biotin + 2 5'-deoxyadenosine + 2 L-methionine + 2 oxidized [2Fe-2S]-[ferredoxin]. It functions in the pathway cofactor biosynthesis; biotin biosynthesis; biotin from 7,8-diaminononanoate: step 2/2. In terms of biological role, catalyzes the conversion of dethiobiotin (DTB) to biotin by the insertion of a sulfur atom into dethiobiotin via a radical-based mechanism. This chain is Biotin synthase, found in Pseudomonas putida (strain W619).